We begin with the raw amino-acid sequence, 600 residues long: Melanophilin (600 aa).

The region spanning 4 to 124 is the RabBD domain; sequence KLDLSKLTDE…IGSLEWYYEH (121 aa). The FYVE-type zinc-finger motif lies at 64–107; that stretch reads CARCLQPYQLLVNSKRQCLECGLFTCKSCGRVHPEEQGWICDPC. 4 disordered regions span residues 146-277, 390-465, 499-541, and 553-600; these read QGGA…AELC, EELT…LSEL, TVKP…AKAM, and NSLK…AHQS. Basic and acidic residues-rich tracts occupy residues 232–243 and 409–420; these read CSEKAAPHKAEG and KDEKAEPNRDKS. The stretch at 373–496 forms a coiled coil; sequence GVRTEADVEE…ESRIAALRAA (124 aa). A compositionally biased stretch (basic and acidic residues) spans 558–569; it reads QGKDDDSFDRKS.

As to quaternary structure, binds RAB27A that has been activated by GTP-binding via its N-terminus. Binds MYO5A via its C-terminal coiled coil domain.

Its subcellular location is the cytoplasm. In terms of biological role, rab effector protein involved in melanosome transport. Serves as link between melanosome-bound RAB27A and the motor protein MYO5A. This chain is Melanophilin (MLPH), found in Homo sapiens (Human).